Consider the following 962-residue polypeptide: Leucine--tRNA ligase (962 aa).

Positions 40–51 (PYPSGAGLHVGH) match the 'HIGH' region motif. A disordered region spans residues 548–570 (SRKLSGQHDEPNSNVTPSAVEGS). A 'KMSKS' region motif is present at residues 737-741 (KMSKS). Lys740 provides a ligand contact to ATP.

Belongs to the class-I aminoacyl-tRNA synthetase family.

Its subcellular location is the cytoplasm. The enzyme catalyses tRNA(Leu) + L-leucine + ATP = L-leucyl-tRNA(Leu) + AMP + diphosphate. The chain is Leucine--tRNA ligase from Christiangramia forsetii (strain DSM 17595 / CGMCC 1.15422 / KT0803) (Gramella forsetii).